The following is a 129-amino-acid chain: Lysozyme C (129 aa).

The 129-residue stretch at 1–129 (KVYGRCELAA…VHAWIRGCRL (129 aa)) folds into the C-type lysozyme domain. 4 disulfides stabilise this stretch: Cys-6–Cys-127, Cys-30–Cys-115, Cys-64–Cys-80, and Cys-76–Cys-94. Catalysis depends on residues Glu-35 and Asp-52.

The protein belongs to the glycosyl hydrolase 22 family. In terms of assembly, monomer.

It is found in the secreted. The enzyme catalyses Hydrolysis of (1-&gt;4)-beta-linkages between N-acetylmuramic acid and N-acetyl-D-glucosamine residues in a peptidoglycan and between N-acetyl-D-glucosamine residues in chitodextrins.. Lysozymes have primarily a bacteriolytic function; those in tissues and body fluids are associated with the monocyte-macrophage system and enhance the activity of immunoagents. The sequence is that of Lysozyme C (LYZ) from Pavo cristatus (Indian peafowl).